The following is a 623-amino-acid chain: Vacuolar-sorting receptor 1 (623 aa).

An N-terminal signal peptide occupies residues 1–22; that stretch reads MKCWRLSAILFLGFMLTSLSTA. At 23-564 the chain is on the lumenal side; the sequence is RFVVEKNSLS…SKTASQAKST (542 aa). The region spanning 54-163 is the PA domain; it reads QYGGSMAGNV…SFGEKLKDAI (110 aa). Residue N143 is glycosylated (N-linked (GlcNAc...) asparagine). EGF-like domains lie at 411 to 461 and 464 to 511; these read ETNE…TTCE and GHGR…KNCE. Intrachain disulfides connect C415–C433, C422–C442, C444–C460, C468–C488, C475–C496, and C498–C510. One can recognise an EGF-like 3; calcium-binding domain in the interval 512 to 554; the sequence is DIDECKDKKACQCPECSCKNTWGSYNCSCSGDLLYIKDQDTCI. The N-linked (GlcNAc...) asparagine glycan is linked to N537. C540 and C553 are disulfide-bonded. A helical transmembrane segment spans residues 565-585; the sequence is WAAFWVVLIALAMIAGGGFLV. Over 586-623 the chain is Cytoplasmic; it reads YKYRIRQYMDSEIRAIMAQYMPLDSQEEGPNHVNHQRG. The Tyrosine-based internalization motif signature appears at 605–608; sequence YMPL.

Belongs to the VSR (BP-80) family. In terms of assembly, interacts with the N-terminal propeptide of aleurein (proaleurein).

The protein resides in the membrane. Its subcellular location is the golgi apparatus membrane. The protein localises to the cytoplasmic vesicle. It is found in the clathrin-coated vesicle membrane. It localises to the prevacuolar compartment membrane. Vacuolar-sorting receptor (VSR) involved in clathrin-coated vesicles sorting from Golgi apparatus to vacuoles. Seems to binds preferentially proteins containing a N-terminal NPIR motif. This Pisum sativum (Garden pea) protein is Vacuolar-sorting receptor 1 (BP80).